The sequence spans 284 residues: 2-dehydro-3-deoxyphosphooctonate aldolase (284 aa).

Belongs to the KdsA family.

The protein localises to the cytoplasm. It catalyses the reaction D-arabinose 5-phosphate + phosphoenolpyruvate + H2O = 3-deoxy-alpha-D-manno-2-octulosonate-8-phosphate + phosphate. The protein operates within carbohydrate biosynthesis; 3-deoxy-D-manno-octulosonate biosynthesis; 3-deoxy-D-manno-octulosonate from D-ribulose 5-phosphate: step 2/3. It functions in the pathway bacterial outer membrane biogenesis; lipopolysaccharide biosynthesis. In Yersinia pseudotuberculosis serotype O:1b (strain IP 31758), this protein is 2-dehydro-3-deoxyphosphooctonate aldolase.